A 314-amino-acid polypeptide reads, in one-letter code: Leucine-rich repeat-containing protein 59 (314 aa).

The Cytoplasmic portion of the chain corresponds to 1–247 (MNKGKIENIK…VPKAKRSICS (247 aa)). LRR repeat units follow at residues 14–35 (DGNE…ELAA), 38–60 (KATF…CSLT), 61–82 (HLIK…IGQL), 84–106 (NLQH…SQLK), and 107–126 (SLKW…AKAA). The stretch at 146-216 (MKVLQEEAEK…AVAAQEQQKK (71 aa)) forms a coiled coil. Disordered stretches follow at residues 165–197 (REQE…KERK) and 212–237 (EQQK…APES). Basic residues predominate over residues 215–225 (KKKKEEKKKKA). A helical membrane pass occupies residues 248–268 (LFFSLLLKLVLLLVIGVSSVV). The Lumenal segment spans residues 269–314 (AVCQLTELRKEAFCIPLNVHFEETVRWAQGLDVVQQVIQKMSDLRT).

In terms of assembly, interacts with SGO1.

It is found in the microsome membrane. It localises to the endoplasmic reticulum membrane. Its subcellular location is the nucleus envelope. Required for nuclear import of FGF1. The protein is Leucine-rich repeat-containing protein 59 (lrrc59) of Danio rerio (Zebrafish).